The sequence spans 226 residues: Transcriptional activator plp-1 (226 aa).

It belongs to the PUR DNA-binding protein family.

It is found in the nucleus. Its subcellular location is the chromosome. Its function is as follows. Probable transcription activator. Binds telomeric DNA containing repeats of the sequence, 5'-TTAGGC-3'. Binds to end-1 promoter, activating end-1 expression, which is required for endoderm specification during embryonic development. The protein is Transcriptional activator plp-1 of Caenorhabditis elegans.